We begin with the raw amino-acid sequence, 415 residues long: MSRSKRLQTGQLRARFAAGLSAMYAAEVPAYGTLVEVCAQVNSDYLTRHRRAERLGSLQRVTAERHGAIRVGNPAELAAVADLFAAFGMLPVGYYDLRTAESPIPVVSTAFRPIDANELAHNPFRVFTSMLAIEDRRYFDADLRTRVQTFLARRQLFDPALLAQARAIAADGGCDADDAPAFVAAAVAAFALSREPVEKSWYDELSRVSAVAADIAGVGSTHINHLTPRVLDIDDLYRRMTERGITMIDTIQGPPRTDGPDVLLRQTSFRALAEPRMFRDEDGTVTPGILRVRFGEVEARGVALTPRGRERYEAAMAAADPAAVWATHFPSTDAEMAAQGLAYYRGGDPSAPIVYEDFLPASAAGIFRSNLDRDSQTGDGPDDAGYNVDWLAGAIGRHIHDPYALYDALAQEERR.

Residues His-66, Arg-70, and His-225 each coordinate 2-oxoadipate. His-66 contributes to the Fe(2+) binding site. Fe(2+)-binding residues include His-225 and Glu-296. Ala-361 is a binding site for 2-oxoadipate.

The protein belongs to the 2-oxoadipate dioxygenase/decarboxylase family. Requires Fe(2+) as cofactor.

It catalyses the reaction 2-oxoadipate + O2 = (R)-2-hydroxyglutarate + CO2. In terms of biological role, catalyzes the decarboxylation and hydroxylation of 2-oxoadipate (2OA) to form D-2-hydroxyglutarate (D-2-HGA). This Mycobacterium bovis (strain ATCC BAA-935 / AF2122/97) protein is 2-oxoadipate dioxygenase/decarboxylase.